Consider the following 216-residue polypeptide: Hsp70 nucleotide exchange factor fes1 (216 aa).

A compositionally biased stretch (polar residues) spans 16 to 33 (STTQQSDAPNASNNTADS). Residues 16-35 (STTQQSDAPNASNNTADSSA) form a disordered region. 3 ARM repeats span residues 27–68 (SNNT…SDEV), 87–126 (IDNANNLEPLGLWTPLVELLQHEEAEMRRMAAWCIGTAVQ), and 129–169 (EKAQ…SAVR).

This sequence belongs to the FES1 family.

It is found in the cytoplasm. In terms of biological role, functions as a nucleotide exchange factor (NEF) for Hsp70 chaperones which accelerates the release of ADP. Required for fully efficient Hsp70-mediated folding of proteins. This is Hsp70 nucleotide exchange factor fes1 (fes1) from Aspergillus oryzae (strain ATCC 42149 / RIB 40) (Yellow koji mold).